The following is a 1038-amino-acid chain: Type I restriction enzyme EcoR124I/EcoR124II endonuclease subunit (1038 aa).

The segment at Gln-31–Gln-249 is nuclease domain. The tract at residues Lys-250–Asp-469 is motor 1 domain. Residues Lys-294–Ile-439 form the Helicase ATP-binding domain. Position 307 to 314 (His-307 to Thr-314) interacts with ATP. Residues Asp-408–His-411 carry the DEAH box motif. Residues Glu-470–Ile-702 form a motor 2 domain region. Positions Gly-720 to Ser-732 are motor 2-helicase linker. A helicase domain region spans residues Ser-732–Glu-860. Positions Arg-859–Gln-886 are helicase-CTD linker. Residues Gln-886–Ile-1038 are C-terminal domain.

The protein belongs to the HsdR family. In terms of assembly, a monomer in solution. The type I restriction/modification system is composed of three polypeptides R, M and S; the restriction enzyme has stoichiometry R(2)M(2)S(1) while the methyltransferase is M(2)S(1). There is an equilibrium between R(2)M(2)S(1) and R(1)M(2)S(1); the latter is methylation and translocation proficient but restriction deficient. As to quaternary structure, (Microbial infection) Holoenenzyme interacts with Escherichia phage T7 protein Ocr; this interaction leads to the inhibition of the restriction activity, but may still allow methylation and translocation.

The catalysed reaction is Endonucleolytic cleavage of DNA to give random double-stranded fragments with terminal 5'-phosphates, ATP is simultaneously hydrolyzed.. In terms of biological role, the restriction (R) subunit of a type I restriction enzyme that recognizes 5'-GAAN(6)RTCG-3' (for EcoR124I) and 5'-GAAN(7)RTCG-3' (for EcoR124II) and cleaves a random distance away. Subunit R is required for both nuclease and ATPase activities, but not for modification. After locating an unmethylated recognition site, the enzyme complex serves as a molecular motor that translocates DNA in an ATP-dependent manner until a collision occurs that triggers cleavage. The enzyme undergoes major structural changes to bring the motor domains into contact with DNA, allowing DNA translocation. This prevents DNA access to the catalytic domains of both the R and M subunits, preventing both restriction and methylation. The R(1)M(2)S(1) complex translocates an average of 555 bp/second on nicked DNA; the R(2)M(2)S(1) complex translocates at double that speed. The 2 R subunit motors are independent and track along the helical pitch of the DNA, inducing positive supercoiling ahead of themselves. The chain is Type I restriction enzyme EcoR124I/EcoR124II endonuclease subunit from Escherichia coli.